Here is a 480-residue protein sequence, read N- to C-terminus: NADH-quinone oxidoreductase subunit N (480 aa).

Transmembrane regions (helical) follow at residues 11–31 (VIPELFVLGMACAILVIDLFV), 38–58 (ITYGLSQFTLIGAAILTIALA), 74–94 (GLSDLLKVAVYLITAVVFLYS), 109–129 (YVLGLFGVLGMMIMISSYSFL), 163–183 (FILGAIASGMLLYGMSILYGI), 200–220 (GAGLNVPLVFALSFVIVGLAF), 239–259 (PTSVTLFIGTAPKLAGLAIIM), 273–293 (WQGMLTILAVLSLAVGNVVAI), 301–321 (MLAYSTISHVGFILMGILAGT), 329–349 (LFYTLVYAIVAAGGFGMIILL), 372–392 (FAFIMLLIMFSMAGVPPTVGF), 405–425 (VEMIWLAIFAVIFSIVGAFYY), and 451–471 (VVLSINGLLVIVLGIFPGLLM).

This sequence belongs to the complex I subunit 2 family. In terms of assembly, NDH-1 is composed of 14 different subunits. Subunits NuoA, H, J, K, L, M, N constitute the membrane sector of the complex.

Its subcellular location is the cell inner membrane. The catalysed reaction is a quinone + NADH + 5 H(+)(in) = a quinol + NAD(+) + 4 H(+)(out). NDH-1 shuttles electrons from NADH, via FMN and iron-sulfur (Fe-S) centers, to quinones in the respiratory chain. The immediate electron acceptor for the enzyme in this species is believed to be ubiquinone. Couples the redox reaction to proton translocation (for every two electrons transferred, four hydrogen ions are translocated across the cytoplasmic membrane), and thus conserves the redox energy in a proton gradient. The chain is NADH-quinone oxidoreductase subunit N from Thioalkalivibrio sulfidiphilus (strain HL-EbGR7).